Consider the following 125-residue polypeptide: Large ribosomal subunit protein bL12 (125 aa).

Belongs to the bacterial ribosomal protein bL12 family. Homodimer. Part of the 50S ribosomal subunit; present in 6 copies per ribosome. Forms part of the ribosomal stalk which helps the ribosome interact with GTP-bound translation factors. Forms a heptameric L10(L12)2(L12)2(L12)2 complex, where L10 forms an elongated spine to which 3 L12 dimers bind in a sequential fashion.

In terms of biological role, forms part of the ribosomal stalk which helps the ribosome interact with GTP-bound translation factors. Is thus essential for accurate translation. The protein is Large ribosomal subunit protein bL12 of Agrobacterium fabrum (strain C58 / ATCC 33970) (Agrobacterium tumefaciens (strain C58)).